We begin with the raw amino-acid sequence, 254 residues long: U3 small nucleolar RNA-associated protein NOL7 (254 aa).

The disordered stretch occupies residues M1–L90. Composition is skewed to acidic residues over residues M18–A31 and P48–E61. Positions E71–L90 are enriched in basic and acidic residues. K127 participates in a covalent cross-link: Glycyl lysine isopeptide (Lys-Gly) (interchain with G-Cter in SUMO2). S129 carries the post-translational modification Phosphoserine. K157 participates in a covalent cross-link: Glycyl lysine isopeptide (Lys-Gly) (interchain with G-Cter in SUMO2). The tract at residues N235–K254 is disordered.

Belongs to the UTP16 family. As to quaternary structure, part of the small subunit (SSU) processome, composed of more than 70 proteins and the RNA chaperone small nucleolar RNA (snoRNA) U3.

It is found in the nucleus. The protein resides in the nucleolus. In terms of biological role, functions as part of the small subunit (SSU) processome, first precursor of the small eukaryotic ribosomal subunit that coordinates the first two steps of ribosome biogenesis in transcription of the primary transcript pre-RNA and pre-18S processing. During the assembly of the SSU processome in the nucleolus, many ribosome biogenesis factors, an RNA chaperone and ribosomal proteins associate with the nascent pre-rRNA and work in concert to generate RNA folding, modifications, rearrangements and cleavage as well as targeted degradation of pre-ribosomal RNA by the RNA exosome. This subunit is required for processing of the 5'-external transcribed spacer sequence (5'ETS) of the primary transcript pre-rRNA to yield the 18S rRNA. Also plays a role in maintaining early pre-rRNA levels, either by assisting in its transcription or stability. The sequence is that of U3 small nucleolar RNA-associated protein NOL7 (Nol7) from Mus musculus (Mouse).